A 210-amino-acid polypeptide reads, in one-letter code: MAFENLKISRHISSSTKNLLKAKKIMAALASNPQMLTRQAHGNKKEQLWRKESLNLEKKCGFCVSVYSNEKLGRSHMEKEWRLKAFWSNIAQPTTLEMEPINNVEELDAVLSHARQLSQPIIIEWMASWCRKCIYLKPKLEKLAAEYNNRAKFYYVDVNKVPQTLVKRGNISKMPTIQLWKEDEMKEEVIGGHKGWLVIEEVRELINKFV.

One can recognise a Thioredoxin domain in the interval 81–210; the sequence is WRLKAFWSNI…EVRELINKFV (130 aa). Catalysis depends on nucleophile residues C130 and C133. C130 and C133 are disulfide-bonded.

Belongs to the thioredoxin family.

The protein localises to the plastid. It is found in the chloroplast stroma. In terms of biological role, probable thiol-disulfide oxidoreductase that may participate in various redox reactions. In Arabidopsis thaliana (Mouse-ear cress), this protein is Thioredoxin-like 3-1, chloroplastic (WCRKC1).